A 522-amino-acid chain; its full sequence is Putative thymidine phosphorylase (522 aa).

Belongs to the thymidine/pyrimidine-nucleoside phosphorylase family. Type 2 subfamily.

It catalyses the reaction thymidine + phosphate = 2-deoxy-alpha-D-ribose 1-phosphate + thymine. This Albidiferax ferrireducens (strain ATCC BAA-621 / DSM 15236 / T118) (Rhodoferax ferrireducens) protein is Putative thymidine phosphorylase.